Here is a 246-residue protein sequence, read N- to C-terminus: 1-(5-phosphoribosyl)-5-[(5-phosphoribosylamino)methylideneamino] imidazole-4-carboxamide isomerase (246 aa).

The active-site Proton acceptor is Asp8. The active-site Proton donor is the Asp130.

It belongs to the HisA/HisF family.

Its subcellular location is the cytoplasm. The enzyme catalyses 1-(5-phospho-beta-D-ribosyl)-5-[(5-phospho-beta-D-ribosylamino)methylideneamino]imidazole-4-carboxamide = 5-[(5-phospho-1-deoxy-D-ribulos-1-ylimino)methylamino]-1-(5-phospho-beta-D-ribosyl)imidazole-4-carboxamide. The protein operates within amino-acid biosynthesis; L-histidine biosynthesis; L-histidine from 5-phospho-alpha-D-ribose 1-diphosphate: step 4/9. This is 1-(5-phosphoribosyl)-5-[(5-phosphoribosylamino)methylideneamino] imidazole-4-carboxamide isomerase from Shigella dysenteriae serotype 1 (strain Sd197).